The following is a 243-amino-acid chain: MKIDILTLFPEMFAPLEHSIVGKARKKGLLEINYHNFRENAEKSRHVDDEPYGGGQGMLLRAQPIFDAYDAIEKKQPRVILLDPAGRTFDQAYAEELAKEEELIFICGHYEGYDERIKMLVTDEISLGDYVLTGGELAAMTMIDATVRLIPEVIGKEASHTDDSFSSGLLEYPQYTRPYEYRGMVVPEVLMSGHHENIRKWRLYESLKKTYLRRPDLLEDYDFTEEETAFLDQIKESLERENL.

S-adenosyl-L-methionine contacts are provided by residues Gly108 and 127–132 (LGDYVL).

Belongs to the RNA methyltransferase TrmD family. As to quaternary structure, homodimer.

It is found in the cytoplasm. The catalysed reaction is guanosine(37) in tRNA + S-adenosyl-L-methionine = N(1)-methylguanosine(37) in tRNA + S-adenosyl-L-homocysteine + H(+). In terms of biological role, specifically methylates guanosine-37 in various tRNAs. This Streptococcus gordonii (strain Challis / ATCC 35105 / BCRC 15272 / CH1 / DL1 / V288) protein is tRNA (guanine-N(1)-)-methyltransferase.